Consider the following 300-residue polypeptide: N-carbamoylputrescine amidase (300 aa).

The CN hydrolase domain occupies 8–266; sequence VTVAALQFAC…EAVLVAQFDL (259 aa). E47 functions as the Proton acceptor in the catalytic mechanism. The active-site Proton donor is K120. The active-site Nucleophile is the C157.

Belongs to the carbon-nitrogen hydrolase superfamily. As to quaternary structure, homooctamer.

The catalysed reaction is N-carbamoylputrescine + H2O + 2 H(+) = putrescine + NH4(+) + CO2. The protein operates within amine and polyamine biosynthesis; putrescine biosynthesis via agmatine pathway; putrescine from N-carbamoylputrescine (amidase route): step 1/1. In terms of biological role, involved in polyamine biosynthesis. This Solanum lycopersicum (Tomato) protein is N-carbamoylputrescine amidase (CPA).